We begin with the raw amino-acid sequence, 252 residues long: Mediator of RNA polymerase II transcription subunit 8 (252 aa).

Residues 6-30 (QDQIKTLEQSRQRLVQLTRSLASLI) adopt a coiled-coil conformation. A disordered region spans residues 170 to 252 (RQLEDEDEEE…MTTGIPPTQR (83 aa)). The span at 173–196 (EDEDEEESESESEEEGEGEEEEME) shows a compositional bias: acidic residues.

Belongs to the Mediator complex subunit 8 family. In terms of assembly, component of the Mediator complex.

The protein resides in the nucleus. Component of the Mediator complex, a coactivator involved in the regulated transcription of nearly all RNA polymerase II-dependent genes. Mediator functions as a bridge to convey information from gene-specific regulatory proteins to the basal RNA polymerase II transcription machinery. Mediator is recruited to promoters by direct interactions with regulatory proteins and serves as a scaffold for the assembly of a functional preinitiation complex with RNA polymerase II and the general transcription factors. The protein is Mediator of RNA polymerase II transcription subunit 8 (med8) of Neosartorya fischeri (strain ATCC 1020 / DSM 3700 / CBS 544.65 / FGSC A1164 / JCM 1740 / NRRL 181 / WB 181) (Aspergillus fischerianus).